Reading from the N-terminus, the 342-residue chain is N-acetyl-gamma-glutamyl-phosphate reductase (342 aa).

Cys-146 is a catalytic residue.

Belongs to the NAGSA dehydrogenase family. Type 1 subfamily.

It localises to the cytoplasm. It carries out the reaction N-acetyl-L-glutamate 5-semialdehyde + phosphate + NADP(+) = N-acetyl-L-glutamyl 5-phosphate + NADPH + H(+). It participates in amino-acid biosynthesis; L-arginine biosynthesis; N(2)-acetyl-L-ornithine from L-glutamate: step 3/4. Its function is as follows. Catalyzes the NADPH-dependent reduction of N-acetyl-5-glutamyl phosphate to yield N-acetyl-L-glutamate 5-semialdehyde. The sequence is that of N-acetyl-gamma-glutamyl-phosphate reductase from Streptomyces coelicolor (strain ATCC BAA-471 / A3(2) / M145).